The primary structure comprises 513 residues: Cytochrome P450 monooxygenase ARMGADRAFT_1018418 (513 aa).

Residues 1 to 21 (MTHASSAWFLAAVVIVTFIVV) traverse the membrane as a helical segment. Heme is bound at residue cysteine 435. An N-linked (GlcNAc...) asparagine glycan is attached at asparagine 442.

Belongs to the cytochrome P450 family. It depends on heme as a cofactor.

The protein localises to the membrane. It functions in the pathway secondary metabolite biosynthesis. Its function is as follows. Cytochrome P450 monooxygenase, part of the gene cluster that mediates the biosynthesis of melleolides, a range of antifungal and phytotoxic polyketide derivatives composed of an orsellinic acid (OA) moiety esterified to various sesquiterpene alcohols. The first step in melleolides biosynthesis is performed by the delta(6)-protoilludene synthase PRO1 which catalyzes the cyclization of farnesyl diphosphate to protoilludene. The orsellinic acid synthase armB produces OA by condensing acetyl-CoA with 3 malonyl-CoA units in a three-round chain elongation reaction folowed by a C2-C7 ring closure. ArmB further catalyzes the trans-esterification of OA to the various sesquiterpene alcohols resulting from the hydroxylation of protoilludene. The melleolides cluster also includes 5 cytochrome P450 monooxygenases, 4 NAD(+)-dependent oxidoreductases, one flavin-dependent oxidoreductase, and one O-methyltransferase. The cytochrome P450 monooxygenases may be involved in protoilludene hydroxylation to elaborate melleolides with multiple alcohol groups, such as melleolide D, which carries alcohol functionalities at C-4, C-5, C-10, and C-13. The role of the NAD(+)-dependent enzymes remains unknown. Numerous melleolides, including arnamial, show 5'-O-methylation of the aromatic moiety which may be catalyzed by the methyltransferase encoded in the cluster. The flavin-dependent oxidoreductase might represent the dehydrogenase yielding the aldehyde in position 1 of arnamial and other melleolides. Finally, several halogenase localized outside of the cluster, are able to catalyze the transfer of a single chlorine atom to the melleolide backbone, resulting in a 6'-chloromelleolide product. In Armillaria gallica (Bulbous honey fungus), this protein is Cytochrome P450 monooxygenase ARMGADRAFT_1018418.